Here is a 345-residue protein sequence, read N- to C-terminus: S-adenosylmethionine:tRNA ribosyltransferase-isomerase (345 aa).

It belongs to the QueA family. In terms of assembly, monomer.

The protein resides in the cytoplasm. The enzyme catalyses 7-aminomethyl-7-carbaguanosine(34) in tRNA + S-adenosyl-L-methionine = epoxyqueuosine(34) in tRNA + adenine + L-methionine + 2 H(+). It functions in the pathway tRNA modification; tRNA-queuosine biosynthesis. Transfers and isomerizes the ribose moiety from AdoMet to the 7-aminomethyl group of 7-deazaguanine (preQ1-tRNA) to give epoxyqueuosine (oQ-tRNA). In Anaeromyxobacter dehalogenans (strain 2CP-C), this protein is S-adenosylmethionine:tRNA ribosyltransferase-isomerase.